Consider the following 341-residue polypeptide: Foldase protein PrsA (341 aa).

An N-terminal signal peptide occupies residues 1 to 22; sequence MKNIGRLAVTALIAVFIFSVTG. Cys23 is lipidated: N-palmitoyl cysteine. Residue Cys23 is the site of S-diacylglycerol cysteine attachment. The PpiC domain occupies 199 to 291; sequence PNKMHLAHIL…FGYHIIKCIK (93 aa).

Belongs to the PrsA family.

Its subcellular location is the cell membrane. The enzyme catalyses [protein]-peptidylproline (omega=180) = [protein]-peptidylproline (omega=0). In terms of biological role, plays a major role in protein secretion by helping the post-translocational extracellular folding of several secreted proteins. The sequence is that of Foldase protein PrsA from Clostridium kluyveri (strain NBRC 12016).